Consider the following 71-residue polypeptide: Small ribosomal subunit protein eS17 (71 aa).

The protein belongs to the eukaryotic ribosomal protein eS17 family.

The polypeptide is Small ribosomal subunit protein eS17 (Pyrobaculum neutrophilum (strain DSM 2338 / JCM 9278 / NBRC 100436 / V24Sta) (Thermoproteus neutrophilus)).